We begin with the raw amino-acid sequence, 143 residues long: Peptide methionine sulfoxide reductase MsrB (143 aa).

Residues 16–139 (DAELRRRLTP…NSAALNFESR (124 aa)) form the MsrB domain. Cys-55, Cys-58, Cys-104, and Cys-107 together coordinate Zn(2+). The Nucleophile role is filled by Cys-128.

This sequence belongs to the MsrB Met sulfoxide reductase family. Zn(2+) is required as a cofactor.

It catalyses the reaction L-methionyl-[protein] + [thioredoxin]-disulfide + H2O = L-methionyl-(R)-S-oxide-[protein] + [thioredoxin]-dithiol. This Burkholderia ambifaria (strain MC40-6) protein is Peptide methionine sulfoxide reductase MsrB.